Reading from the N-terminus, the 373-residue chain is Cathecol O-methyltransferase 1 (373 aa).

Residues glycine 209, aspartate 232, aspartate 252, methionine 253, methionine 265, and lysine 266 each coordinate S-adenosyl-L-homocysteine. Aspartate 232 is an S-adenosyl-L-methionine binding site. The Proton acceptor role is filled by histidine 279.

Belongs to the class I-like SAM-binding methyltransferase superfamily. Cation-independent O-methyltransferase family. COMT subfamily.

The catalysed reaction is catechol + S-adenosyl-L-methionine = guaiacol + S-adenosyl-L-homocysteine + H(+). O-methyltransferase that catalyzes the conversion of catechol to guaiacol. Involved in the production of guaiacol in fruits. The polypeptide is Cathecol O-methyltransferase 1 (Solanum lycopersicum (Tomato)).